We begin with the raw amino-acid sequence, 590 residues long: UvrABC system protein C (590 aa).

The GIY-YIG domain occupies 14–91 (EQPGCYLMKD…IKKHDPKYNV (78 aa)). Residues 196 to 231 (EDVKRELAEKMHEAAETLEFERAKEYRDQIAAIEMT) enclose the UVR domain.

It belongs to the UvrC family. In terms of assembly, interacts with UvrB in an incision complex.

The protein localises to the cytoplasm. The UvrABC repair system catalyzes the recognition and processing of DNA lesions. UvrC both incises the 5' and 3' sides of the lesion. The N-terminal half is responsible for the 3' incision and the C-terminal half is responsible for the 5' incision. This Geobacillus kaustophilus (strain HTA426) protein is UvrABC system protein C.